A 545-amino-acid chain; its full sequence is Probable target of rapamycin complex 2 subunit BIT2 (545 aa).

Disordered regions lie at residues 1–24 (MATD…PNIK) and 78–166 (DGSN…GTSS). Polar residues-rich tracts occupy residues 11-24 (ATSG…PNIK), 106-130 (IGSS…SNSR), and 151-166 (RSGS…GTSS).

As to quaternary structure, interacts with the target of rapamycin complex 2 (TORC2) subunit TSC11 and the TORC2 effectors SLM1 and SLM2.

In Saccharomyces cerevisiae (strain ATCC 204508 / S288c) (Baker's yeast), this protein is Probable target of rapamycin complex 2 subunit BIT2 (BIT2).